The following is a 168-amino-acid chain: Transcription antitermination protein NusB (168 aa).

Belongs to the NusB family.

Involved in transcription antitermination. Required for transcription of ribosomal RNA (rRNA) genes. Binds specifically to the boxA antiterminator sequence of the ribosomal RNA (rrn) operons. This is Transcription antitermination protein NusB from Prosthecochloris aestuarii (strain DSM 271 / SK 413).